The primary structure comprises 467 residues: Ergochrome gene cluster transcriptional coactivator CPUR_05432 (467 aa).

Residues 109-179 form the HTH iclR-type domain; the sequence is IAIQCEMLGS…RRGYVAHTPL (71 aa). The H-T-H motif DNA-binding region spans 139 to 158; the sequence is IQDVANLSNVPEQQLAQMIG.

Its subcellular location is the nucleus. Functionally, transcriptional coactivator; part of the gene cluster responsible for the typical purple-black color of the ergot sclerotia. The ergochrome gene cluster produces several ergot pigments including the yellow ergochrome secalonic acid and its derivatives, as well as the red anthraquinones endocrocin and clavorubin. With CPUR_05433, coregulates the production of geodin. This is Ergochrome gene cluster transcriptional coactivator CPUR_05432 from Claviceps purpurea (strain 20.1) (Ergot fungus).